The primary structure comprises 379 residues: dTDP-3-amino-3,4,6-trideoxy-alpha-D-glucose transaminase (379 aa).

Pyridoxal 5'-phosphate is bound by residues Gly-67, Gln-167, 188-193 (SFYPGK), Tyr-221, Tyr-227, 235-237 (NSR), and Tyr-318. Position 193 is an N6-(pyridoxal phosphate)lysine (Lys-193).

The protein belongs to the degT/dnrJ/eryC1 family. In terms of assembly, homodimer. Requires pyridoxal 5'-phosphate as cofactor.

It carries out the reaction dTDP-3-amino-3,4,6-trideoxy-alpha-D-glucose + 2-oxoglutarate = dTDP-3-dehydro-4,6-dideoxy-alpha-D-glucose + L-glutamate. Its pathway is antibiotic biosynthesis. Functionally, involved in the biosynthesis of dTDP-alpha-D-desosamine, a sugar found in several bacterial macrolide antibiotics. Catalyzes the reversible transfer of the amino group from L-glutamate to the C-3 position of dTDP-3-keto-4,6-deoxyglucose to yield dTDP-3-amino-3,4,6-trideoxyglucose. This Streptomyces venezuelae protein is dTDP-3-amino-3,4,6-trideoxy-alpha-D-glucose transaminase.